Here is a 276-residue protein sequence, read N- to C-terminus: Chymotrypsin (276 aa).

An N-terminal signal peptide occupies residues 1-16 (MKVALVVLALFGVSLA). Positions 17-45 (ASIDNIEIPPSKNIYVEPINQPEVDPSLE) are cleaved as a propeptide — activation peptide. In terms of domain architecture, Peptidase S1 spans 46–272 (IVNGQEVVPH…YLNWLQTHSE (227 aa)). Cys74 and Cys90 form a disulfide bridge. Catalysis depends on charge relay system residues His89 and Asp135. N-linked (GlcNAc...) asparagine glycosylation is found at Asn144 and Asn193. 2 disulfide bridges follow: Cys202-Cys215 and Cys225-Cys250. Catalysis depends on Ser229, which acts as the Charge relay system.

This sequence belongs to the peptidase S1 family. As to expression, expressed in larval carcasses and gut, and adult gut.

The protein resides in the secreted. It localises to the extracellular space. It carries out the reaction Preferential cleavage: Tyr-|-Xaa, Trp-|-Xaa, Phe-|-Xaa, Leu-|-Xaa.. Its function is as follows. Serine protease with chymotryptic and collagenolytic activities. The chain is Chymotrypsin from Phaedon cochleariae (Mustard beetle).